The primary structure comprises 541 residues: Transcription termination factor MTERF4, chloroplastic (541 aa).

The N-terminal 45 residues, 1 to 45, are a transit peptide targeting the chloroplast; the sequence is MKIRFCNGFTKPGFLLVHFEPPSFFAVRSRSLSDSTYGNLCNHKK. Disordered stretches follow at residues 66–103 and 503–541; these read SRSL…SLYS and EVET…EEFA. Over residues 85–99 the composition is skewed to basic and acidic residues; it reads GRDRDRDKDKGRDSK. Residues 507 to 517 are compositionally biased toward polar residues; the sequence is DPSSFDMNTLM. Residues 521–541 are compositionally biased toward acidic residues; the sequence is REEESDSEYEEEEDDDDEEFA.

The protein belongs to the mTERF family.

The protein localises to the plastid. Its subcellular location is the chloroplast. It is found in the mitochondrion. Transcription termination factor required for processing and steady-state levels of plastid transcripts. Required for splicing of the chloroplastic Clp protease (ClpP) group IIa intron. Required for maturation of 16S rRNA and 23S rRNA in the chloroplast. Essential for embryogenesis. Required for the maintenance of the correct levels of transcripts in the mitochondria and chloroplasts. The protein is Transcription termination factor MTERF4, chloroplastic of Arabidopsis thaliana (Mouse-ear cress).